The chain runs to 189 residues: UPF0301 protein RAF_ORF0041 (189 aa).

It belongs to the UPF0301 (AlgH) family.

This Rickettsia africae (strain ESF-5) protein is UPF0301 protein RAF_ORF0041.